Here is a 263-residue protein sequence, read N- to C-terminus: Imidazole glycerol phosphate synthase subunit HisF (263 aa).

Active-site residues include aspartate 11 and aspartate 130.

Belongs to the HisA/HisF family. Heterodimer of HisH and HisF.

It localises to the cytoplasm. It catalyses the reaction 5-[(5-phospho-1-deoxy-D-ribulos-1-ylimino)methylamino]-1-(5-phospho-beta-D-ribosyl)imidazole-4-carboxamide + L-glutamine = D-erythro-1-(imidazol-4-yl)glycerol 3-phosphate + 5-amino-1-(5-phospho-beta-D-ribosyl)imidazole-4-carboxamide + L-glutamate + H(+). The protein operates within amino-acid biosynthesis; L-histidine biosynthesis; L-histidine from 5-phospho-alpha-D-ribose 1-diphosphate: step 5/9. Functionally, IGPS catalyzes the conversion of PRFAR and glutamine to IGP, AICAR and glutamate. The HisF subunit catalyzes the cyclization activity that produces IGP and AICAR from PRFAR using the ammonia provided by the HisH subunit. The chain is Imidazole glycerol phosphate synthase subunit HisF from Herpetosiphon aurantiacus (strain ATCC 23779 / DSM 785 / 114-95).